We begin with the raw amino-acid sequence, 782 residues long: Tripartite terminase subunit 1 (782 aa).

Residues 190-218 (CLQCYEELAAVPNQGRSILKRLRGLLCDH) form a C3H1-type zinc finger. 666–673 (YNEAFGKE) contacts ATP. Pro residues predominate over residues 727 to 740 (APPPPAAPSPPPAE). The tract at residues 727 to 754 (APPPPAAPSPPPAEPATTAGASRKRPAV) is disordered.

This sequence belongs to the herpesviridae TRM1 protein family. In terms of assembly, associates with TRM2 and TRM3 to form the tripartite terminase complex. Interacts with portal protein.

It localises to the host nucleus. Component of the molecular motor that translocates viral genomic DNA in empty capsid during DNA packaging. Forms a tripartite terminase complex together with TRM2 and TRM3 in the host cytoplasm. Once the complex reaches the host nucleus, it interacts with the capsid portal vertex. This portal forms a ring in which genomic DNA is translocated into the capsid. TRM1 carries an endonuclease activity that plays an important role for the cleavage of concatemeric viral DNA into unit length genomes. The protein is Tripartite terminase subunit 1 of Tupaiid herpesvirus (strain 2) (TuHV-2).